A 118-amino-acid polypeptide reads, in one-letter code: Large ribosomal subunit protein uL18 (118 aa).

The protein belongs to the universal ribosomal protein uL18 family. Part of the 50S ribosomal subunit; part of the 5S rRNA/L5/L18/L25 subcomplex. Contacts the 5S and 23S rRNAs.

Functionally, this is one of the proteins that bind and probably mediate the attachment of the 5S RNA into the large ribosomal subunit, where it forms part of the central protuberance. This chain is Large ribosomal subunit protein uL18, found in Acidobacterium capsulatum (strain ATCC 51196 / DSM 11244 / BCRC 80197 / JCM 7670 / NBRC 15755 / NCIMB 13165 / 161).